Here is a 146-residue protein sequence, read N- to C-terminus: 3-hydroxyacyl-[acyl-carrier-protein] dehydratase FabZ (146 aa).

Residue His-49 is part of the active site.

Belongs to the thioester dehydratase family. FabZ subfamily.

The protein localises to the cytoplasm. It catalyses the reaction a (3R)-hydroxyacyl-[ACP] = a (2E)-enoyl-[ACP] + H2O. Functionally, involved in unsaturated fatty acids biosynthesis. Catalyzes the dehydration of short chain beta-hydroxyacyl-ACPs and long chain saturated and unsaturated beta-hydroxyacyl-ACPs. This Pseudomonas fluorescens (strain Pf0-1) protein is 3-hydroxyacyl-[acyl-carrier-protein] dehydratase FabZ.